The chain runs to 666 residues: ATP synthase subunit alpha 2 (666 aa).

ATP is bound at residue 182–189 (GDRATGKT). A disordered region spans residues 527 to 666 (MPAEDAAGDI…DAEAEARHKR (140 aa)). Basic and acidic residues predominate over residues 545–590 (ARGDADRDADHGANREVSREVSPEASREVSREVSCEVSHEADRDAA). Low complexity predominate over residues 591-601 (ADAARVAGRAP). A compositionally biased stretch (basic and acidic residues) spans 623-641 (ADGDRASASRPRPDARGDA).

This sequence belongs to the ATPase alpha/beta chains family. F-type ATPases have 2 components, CF(1) - the catalytic core - and CF(0) - the membrane proton channel. CF(1) has five subunits: alpha(3), beta(3), gamma(1), delta(1), epsilon(1). CF(0) has three main subunits: a(1), b(2) and c(9-12). The alpha and beta chains form an alternating ring which encloses part of the gamma chain. CF(1) is attached to CF(0) by a central stalk formed by the gamma and epsilon chains, while a peripheral stalk is formed by the delta and b chains.

It localises to the cell inner membrane. The catalysed reaction is ATP + H2O + 4 H(+)(in) = ADP + phosphate + 5 H(+)(out). In terms of biological role, produces ATP from ADP in the presence of a proton gradient across the membrane. The alpha chain is a regulatory subunit. In Burkholderia pseudomallei (strain K96243), this protein is ATP synthase subunit alpha 2.